Here is a 395-residue protein sequence, read N- to C-terminus: HORMA domain-containing protein 1 (395 aa).

In terms of domain architecture, HORMA spans 24 to 226 (QQSLVLVKRL…TPFHTFKVKV (203 aa)). Positions 329–395 (DVSESKTRSG…RKFSEPKEYV (67 aa)) are disordered. The segment covering 344–353 (KMANGNQPVK) has biased composition (polar residues). Residues 354–363 (SSKENRKRNQ) are compositionally biased toward basic and acidic residues. Serine 377 carries the phosphoserine modification. Positions 384 to 387 (KRRK) match the Nuclear localization signal motif.

In terms of assembly, interacts with HORMAD2. Interacts with IHO1. Phosphorylated at Ser-378 in a SPO11-dependent manner.

The protein localises to the nucleus. It localises to the chromosome. Functionally, plays a key role in meiotic progression. Regulates 3 different functions during meiosis: ensures that sufficient numbers of processed DNA double-strand breaks (DSBs) are available for successful homology search by increasing the steady-state numbers of single-stranded DSB ends. Promotes synaptonemal-complex formation independently of its role in homology search. Plays a key role in the male mid-pachytene checkpoint and the female meiotic prophase checkpoint: required for efficient build-up of ATR activity on unsynapsed chromosome regions, a process believed to form the basis of meiotic silencing of unsynapsed chromatin (MSUC) and meiotic prophase quality control in both sexes. This chain is HORMA domain-containing protein 1 (HORMAD1), found in Canis lupus familiaris (Dog).